The sequence spans 415 residues: MSLQAPKGTKDLLPTESYKWQYLENKFRNIAADFGCREIRTPVFEYTELFQRGVGETTDVVQKEMYTFEDKAGRSITLKPEGTSPAVRAFVEGRLFNETQPTKMYYFTPVMRYENVQKGRLRQHHQFGIEIFGAKDASVDAEVISIPVGIYKELGVEGVELNINSIGCPKCRKTYNEALKKYLSKNYDKLCSTCKTRFDKNPLRILDCKVDTCKEIVKDAPIILDYICDECKDHFEALKSYLDVLDIKYKVDPFIVRGLDYYSKTVFEFIIDDITICAGGRYDYLIEEIGGPSMPAVGFGMGIERLLLTLQEKAIEIPEEAYVDLYLGNMGDKAKLEVLKLAKELRDRHIKCEIDHMGKSVKAQMKYANRIGAKYSMVLGEEELNTGKVSLKRMEDGQQIEVDIKEIDTLIKVFK.

It belongs to the class-II aminoacyl-tRNA synthetase family. Homodimer.

The protein resides in the cytoplasm. It carries out the reaction tRNA(His) + L-histidine + ATP = L-histidyl-tRNA(His) + AMP + diphosphate + H(+). This Clostridium botulinum (strain ATCC 19397 / Type A) protein is Histidine--tRNA ligase.